Consider the following 183-residue polypeptide: Negative modulator of initiation of replication (183 aa).

Residues 118–122 (RTRIY) form an interaction with DNA region.

It belongs to the SeqA family. As to quaternary structure, homodimer. Polymerizes to form helical filaments.

It localises to the cytoplasm. In terms of biological role, negative regulator of replication initiation, which contributes to regulation of DNA replication and ensures that replication initiation occurs exactly once per chromosome per cell cycle. Binds to pairs of hemimethylated GATC sequences in the oriC region, thus preventing assembly of replication proteins and re-initiation at newly replicated origins. Repression is relieved when the region becomes fully methylated. This is Negative modulator of initiation of replication from Proteus mirabilis (strain HI4320).